The sequence spans 236 residues: uncharacterized protein (236 aa).

The protein localises to the virion. This is an uncharacterized protein from Acanthamoeba polyphaga (Amoeba).